A 207-amino-acid polypeptide reads, in one-letter code: Protein N-terminal glutamine amidohydrolase (207 aa).

Catalysis depends on residues Cys-30, His-83, and Asp-99.

The protein belongs to the NTAQ1 family. As to quaternary structure, monomer.

It is found in the cytoplasm. The protein localises to the cytosol. The protein resides in the nucleus. The catalysed reaction is N-terminal L-glutaminyl-[protein] + H2O = N-terminal L-glutamyl-[protein] + NH4(+). Functionally, mediates the side-chain deamidation of N-terminal glutamine residues to glutamate, an important step in N-end rule pathway of protein degradation. Conversion of the resulting N-terminal glutamine to glutamate renders the protein susceptible to arginylation, polyubiquitination and degradation as specified by the N-end rule. Does not act on substrates with internal or C-terminal glutamine and does not act on non-glutamine residues in any position. Does not deaminate acetylated N-terminal glutamine. With the exception of proline, all tested second-position residues on substrate peptides do not greatly influence the activity. In contrast, a proline at position 2, virtually abolishes deamidation of N-terminal glutamine. The sequence is that of Protein N-terminal glutamine amidohydrolase (NTAQ1) from Bos taurus (Bovine).